A 516-amino-acid chain; its full sequence is Chromosomal replication initiator protein DnaA (516 aa).

Residues 1–72 (MSLEHWNLCL…LLSEFAGDDL (72 aa)) are domain I, interacts with DnaA modulators. Residues 72–179 (LAPALKLAVK…QVEGGINHGA (108 aa)) form a domain II region. The tract at residues 180-396 (NLNNSFTFDN…GALKRVIANS (217 aa)) is domain III, AAA+ region. ATP contacts are provided by Gly224, Gly226, Lys227, and Thr228. Residues 397–516 (HFTGRAITPD…YKQLMRILTT (120 aa)) form a domain IV, binds dsDNA region.

This sequence belongs to the DnaA family. As to quaternary structure, oligomerizes as a right-handed, spiral filament on DNA at oriC.

It is found in the cytoplasm. Functionally, plays an essential role in the initiation and regulation of chromosomal replication. ATP-DnaA binds to the origin of replication (oriC) to initiate formation of the DNA replication initiation complex once per cell cycle. Binds the DnaA box (a 9 base pair repeat at the origin) and separates the double-stranded (ds)DNA. Forms a right-handed helical filament on oriC DNA; dsDNA binds to the exterior of the filament while single-stranded (ss)DNA is stabiized in the filament's interior. The ATP-DnaA-oriC complex binds and stabilizes one strand of the AT-rich DNA unwinding element (DUE), permitting loading of DNA polymerase. After initiation quickly degrades to an ADP-DnaA complex that is not apt for DNA replication. Binds acidic phospholipids. The chain is Chromosomal replication initiator protein DnaA from Marinomonas sp. (strain MWYL1).